Consider the following 207-residue polypeptide: Ribosomal RNA small subunit methyltransferase G (207 aa).

Residues glycine 73, leucine 78, 124-125 (VE), and arginine 139 contribute to the S-adenosyl-L-methionine site.

This sequence belongs to the methyltransferase superfamily. RNA methyltransferase RsmG family.

Its subcellular location is the cytoplasm. It catalyses the reaction guanosine(527) in 16S rRNA + S-adenosyl-L-methionine = N(7)-methylguanosine(527) in 16S rRNA + S-adenosyl-L-homocysteine. Functionally, specifically methylates the N7 position of guanine in position 527 of 16S rRNA. This Klebsiella pneumoniae (strain 342) protein is Ribosomal RNA small subunit methyltransferase G.